A 350-amino-acid chain; its full sequence is MIEQLNEILNSFKTKLKSVKDLNDWEELKKEFIGKDSNLTTILKSIKTISNEQKQEIGKLANQIRTTIIDNLNNKQEELKNKELLIKLEKEKIDVSLKNSSLKFGSKHVLNIVIEEISDIFTEIGFEMVSGTEIESDLYNFQKLNLPLDHPARDMQDTFYLDNNLVLRTHCTNMTSRMLTKLASLKTDDNNLAVISYGNVYRRDDDDATHSHQFMQIDGFVVGNKISFANLKWILKYMCQRLFNKDINIRLRPSYFPFTEPSVEVDVSCFKCDSKGCFICKKTGWIEILGAGMINEHVLKLNGLDPTKCSGLAFGIGIERIAMLKFNISNIRNFYENNVKFLEQFKFYSE.

Residue Glu-260 participates in Mg(2+) binding.

This sequence belongs to the class-II aminoacyl-tRNA synthetase family. Phe-tRNA synthetase alpha subunit type 1 subfamily. Tetramer of two alpha and two beta subunits. The cofactor is Mg(2+).

The protein localises to the cytoplasm. The enzyme catalyses tRNA(Phe) + L-phenylalanine + ATP = L-phenylalanyl-tRNA(Phe) + AMP + diphosphate + H(+). This is Phenylalanine--tRNA ligase alpha subunit from Mycoplasma capricolum subsp. capricolum (strain California kid / ATCC 27343 / NCTC 10154).